Reading from the N-terminus, the 200-residue chain is Pyridoxal 5'-phosphate synthase subunit PdxT (200 aa).

Gly50 to Ser52 contributes to the L-glutamine binding site. The active-site Nucleophile is Cys82. L-glutamine-binding positions include Arg110 and Ile138 to Arg139. Residues His174 and Glu176 each act as charge relay system in the active site.

The protein belongs to the glutaminase PdxT/SNO family. In the presence of PdxS, forms a dodecamer of heterodimers. Only shows activity in the heterodimer.

It catalyses the reaction aldehydo-D-ribose 5-phosphate + D-glyceraldehyde 3-phosphate + L-glutamine = pyridoxal 5'-phosphate + L-glutamate + phosphate + 3 H2O + H(+). It carries out the reaction L-glutamine + H2O = L-glutamate + NH4(+). It functions in the pathway cofactor biosynthesis; pyridoxal 5'-phosphate biosynthesis. Catalyzes the hydrolysis of glutamine to glutamate and ammonia as part of the biosynthesis of pyridoxal 5'-phosphate. The resulting ammonia molecule is channeled to the active site of PdxS. The polypeptide is Pyridoxal 5'-phosphate synthase subunit PdxT (Oceanobacillus iheyensis (strain DSM 14371 / CIP 107618 / JCM 11309 / KCTC 3954 / HTE831)).